The chain runs to 616 residues: Formin-binding protein 1 (616 aa).

Residues Met-1 to Glu-79 form a required for self-association and induction of membrane tubulation region. Positions Met-1–Asp-264 constitute an F-BAR domain. The segment at Met-1–Thr-334 is interaction with microtubules. N6-acetyllysine occurs at positions 66 and 110. A coiled-coil region spans residues Tyr-67–Ile-259. Residues Gly-251 to Ser-616 are required for self-association and induction of membrane tubulation. Disordered regions lie at residues Gly-280–Gly-314 and Leu-332–Leu-366. Residues Ser-296 and Ser-299 each carry the phosphoserine modification. Pro residues predominate over residues His-337–Ser-346. Phosphoserine occurs at positions 348 and 358. Positions Pro-398–Glu-490 form a coiled coil. The segment at Glu-399 to Ile-551 is interaction with RND2. In terms of domain architecture, REM-1 spans Asn-403–Glu-480. The segment at Ala-487–His-531 is disordered. The interaction with PDE6G stretch occupies residues Arg-494–Ser-616. Ser-496 carries the phosphoserine modification. At Tyr-499 the chain carries Phosphotyrosine. Over residues Gln-502 to Ala-511 the composition is skewed to polar residues. Residues Asp-513 to Ser-616 form a required for interaction with TNKS region. Residue Ser-520 is modified to Phosphoserine. Positions Leu-534–Ser-616 are interaction with DNM1 and DNM3. In terms of domain architecture, SH3 spans Pro-549 to Asp-610. The segment at Pro-549–Ser-616 is interaction with ARHGAP17, DAAM1, DIAPH1 and DIAPH2. An interaction with DNM2 and WASL region spans residues Gly-552–Tyr-608. An interaction with FASLG region spans residues Gly-552–Leu-609.

This sequence belongs to the FNBP1 family. Homodimerizes, the dimers can polymerize end-to-end to form filamentous structures. Interacts specifically with GTP-bound RND2 and CDC42. Interacts with AKAP9, ARHGAP17, DAAM1, DIAPH1, DIAPH2, DNM1, DNM2, DNM3, FASLG/FASL, microtubules, PDE6G, SNX2 and WASL/N-WASP. May interact with TNKS. As to expression, expressed in brain and testis.

The protein localises to the cytoplasm. It localises to the cytoskeleton. It is found in the cell cortex. The protein resides in the lysosome. Its subcellular location is the cytoplasmic vesicle. The protein localises to the cell membrane. It localises to the membrane. It is found in the clathrin-coated pit. Its function is as follows. Required to coordinate membrane tubulation with reorganization of the actin cytoskeleton during the late stage of clathrin-mediated endocytosis. Binds to lipids such as phosphatidylinositol 4,5-bisphosphate and phosphatidylserine and promotes membrane invagination and the formation of tubules. Also enhances actin polymerization via the recruitment of WASL/N-WASP, which in turn activates the Arp2/3 complex. Actin polymerization may promote the fission of membrane tubules to form endocytic vesicles. May act as a link between RND2 signaling and regulation of the actin cytoskeleton. May be required for the lysosomal retention of FASLG/FASL. The chain is Formin-binding protein 1 (Fnbp1) from Mus musculus (Mouse).